The sequence spans 450 residues: 3-phosphoshikimate 1-carboxyvinyltransferase (450 aa).

Residues Lys28, Ser29, and Arg33 each coordinate 3-phosphoshikimate. Residue Lys28 coordinates phosphoenolpyruvate. Phosphoenolpyruvate contacts are provided by Gly100 and Arg128. 3-phosphoshikimate is bound by residues Ser173, Gln175, Asp326, and Lys353. Position 175 (Gln175) interacts with phosphoenolpyruvate. Asp326 (proton acceptor) is an active-site residue. Positions 357 and 402 each coordinate phosphoenolpyruvate.

It belongs to the EPSP synthase family. Monomer.

Its subcellular location is the cytoplasm. It catalyses the reaction 3-phosphoshikimate + phosphoenolpyruvate = 5-O-(1-carboxyvinyl)-3-phosphoshikimate + phosphate. It participates in metabolic intermediate biosynthesis; chorismate biosynthesis; chorismate from D-erythrose 4-phosphate and phosphoenolpyruvate: step 6/7. Its function is as follows. Catalyzes the transfer of the enolpyruvyl moiety of phosphoenolpyruvate (PEP) to the 5-hydroxyl of shikimate-3-phosphate (S3P) to produce enolpyruvyl shikimate-3-phosphate and inorganic phosphate. The chain is 3-phosphoshikimate 1-carboxyvinyltransferase from Brucella abortus biovar 1 (strain 9-941).